The primary structure comprises 139 residues: Putative pre-16S rRNA nuclease (139 aa).

The protein belongs to the YqgF nuclease family.

The protein localises to the cytoplasm. Could be a nuclease involved in processing of the 5'-end of pre-16S rRNA. The protein is Putative pre-16S rRNA nuclease of Caldanaerobacter subterraneus subsp. tengcongensis (strain DSM 15242 / JCM 11007 / NBRC 100824 / MB4) (Thermoanaerobacter tengcongensis).